We begin with the raw amino-acid sequence, 215 residues long: MGKVYDWFEERLEIQAIADDITSKYVPPHVNIFYCLGGITLTCFLVQVASGFAMTFYYRPTVTEAFASVQYIMTEVNFGWLIRSVHRWSASMMVLMMILHVFRVYLTGGFKKPRELTWVTGVILAVLTVSFGVTGYSLPWDQIGYWAVKIVTGVPEAIPLVGSSLVELLRGSVSVGQSTLTRFYSLHTFVLPLLTAVLMLMHFLMIRKQGISGPL.

A helical membrane pass occupies residues 32–52 (IFYCLGGITLTCFLVQVASGF). Cys35 is a heme c binding site. Heme b contacts are provided by His86 and His100. Helical transmembrane passes span 90 to 110 (ASMMVLMMILHVFRVYLTGGF), 116 to 136 (LTWVTGVILAVLTVSFGVTGY), and 186 to 206 (LHTFVLPLLTAVLMLMHFLMI). Positions 187 and 202 each coordinate heme b.

The protein belongs to the cytochrome b family. PetB subfamily. As to quaternary structure, the 4 large subunits of the cytochrome b6-f complex are cytochrome b6, subunit IV (17 kDa polypeptide, PetD), cytochrome f and the Rieske protein, while the 4 small subunits are PetG, PetL, PetM and PetN. The complex functions as a dimer. Heme b is required as a cofactor. Heme c serves as cofactor.

The protein resides in the plastid. The protein localises to the chloroplast thylakoid membrane. Functionally, component of the cytochrome b6-f complex, which mediates electron transfer between photosystem II (PSII) and photosystem I (PSI), cyclic electron flow around PSI, and state transitions. The sequence is that of Cytochrome b6 from Anthoceros angustus (Hornwort).